The primary structure comprises 360 residues: Protein Wnt-5b (360 aa).

Residues 1–16 (MTPILRLLLLSSLLSC) form the signal peptide. Cys84 and Cys95 are joined by a disulfide. Residues Asn94 and Asn100 are each glycosylated (N-linked (GlcNAc...) asparagine). 10 disulfides stabilise this stretch: Cys134-Cys142, Cys144-Cys162, Cys218-Cys232, Cys220-Cys227, Cys289-Cys320, Cys305-Cys315, Cys319-Cys359, Cys335-Cys350, Cys337-Cys347, and Cys342-Cys343. Ser224 carries the O-palmitoleoyl serine; by PORCN lipid modification. Residues Asn292 and Asn306 are each glycosylated (N-linked (GlcNAc...) asparagine).

It belongs to the Wnt family. Palmitoleoylation is required for efficient binding to frizzled receptors. Depalmitoleoylation leads to Wnt signaling pathway inhibition.

The protein localises to the secreted. It localises to the extracellular space. The protein resides in the extracellular matrix. Its function is as follows. Ligand for members of the frizzled family of seven transmembrane receptors. Probable developmental protein. May be a signaling molecule which affects the development of discrete regions of tissues. Is likely to signal over only few cell diameters. This Xenopus laevis (African clawed frog) protein is Protein Wnt-5b (wnt5b).